The primary structure comprises 209 residues: Ribosomal RNA large subunit methyltransferase E (209 aa).

The S-adenosyl-L-methionine site is built by glycine 63, tryptophan 65, aspartate 83, aspartate 99, and aspartate 124. The active-site Proton acceptor is the lysine 164.

Belongs to the class I-like SAM-binding methyltransferase superfamily. RNA methyltransferase RlmE family.

It is found in the cytoplasm. The enzyme catalyses uridine(2552) in 23S rRNA + S-adenosyl-L-methionine = 2'-O-methyluridine(2552) in 23S rRNA + S-adenosyl-L-homocysteine + H(+). Its function is as follows. Specifically methylates the uridine in position 2552 of 23S rRNA at the 2'-O position of the ribose in the fully assembled 50S ribosomal subunit. The chain is Ribosomal RNA large subunit methyltransferase E from Cronobacter sakazakii (strain ATCC BAA-894) (Enterobacter sakazakii).